Consider the following 279-residue polypeptide: Dermonecrotic toxin LspiSicTox-betaIE3i (279 aa).

Residue histidine 5 is part of the active site. Mg(2+) is bound by residues glutamate 25 and aspartate 27. Histidine 41 acts as the Nucleophile in catalysis. 2 disulfides stabilise this stretch: cysteine 45-cysteine 51 and cysteine 47-cysteine 190. Residue aspartate 85 participates in Mg(2+) binding.

The protein belongs to the arthropod phospholipase D family. Class II subfamily. The cofactor is Mg(2+). Expressed by the venom gland.

The protein resides in the secreted. It catalyses the reaction an N-(acyl)-sphingosylphosphocholine = an N-(acyl)-sphingosyl-1,3-cyclic phosphate + choline. The catalysed reaction is an N-(acyl)-sphingosylphosphoethanolamine = an N-(acyl)-sphingosyl-1,3-cyclic phosphate + ethanolamine. It carries out the reaction a 1-acyl-sn-glycero-3-phosphocholine = a 1-acyl-sn-glycero-2,3-cyclic phosphate + choline. The enzyme catalyses a 1-acyl-sn-glycero-3-phosphoethanolamine = a 1-acyl-sn-glycero-2,3-cyclic phosphate + ethanolamine. Functionally, dermonecrotic toxins cleave the phosphodiester linkage between the phosphate and headgroup of certain phospholipids (sphingolipid and lysolipid substrates), forming an alcohol (often choline) and a cyclic phosphate. This toxin acts on sphingomyelin (SM). It may also act on ceramide phosphoethanolamine (CPE), lysophosphatidylcholine (LPC) and lysophosphatidylethanolamine (LPE), but not on lysophosphatidylserine (LPS), and lysophosphatidylglycerol (LPG). It acts by transphosphatidylation, releasing exclusively cyclic phosphate products as second products. Induces dermonecrosis, hemolysis, increased vascular permeability, edema, inflammatory response, and platelet aggregation. The chain is Dermonecrotic toxin LspiSicTox-betaIE3i from Loxosceles spinulosa (Recluse spider).